The chain runs to 901 residues: Probable inorganic carbon transporter subunit DabA (901 aa).

Zn(2+)-binding residues include Cys424, Asp426, His606, and Cys621.

Belongs to the inorganic carbon transporter (TC 9.A.2) DabA family. Forms a complex with DabB. Zn(2+) is required as a cofactor.

It is found in the cell membrane. Part of an energy-coupled inorganic carbon pump. The protein is Probable inorganic carbon transporter subunit DabA of Staphylococcus aureus (strain Mu3 / ATCC 700698).